A 224-amino-acid polypeptide reads, in one-letter code: Orotate phosphoribosyltransferase (224 aa).

Residues Lys-26, 73 to 74 (YK), Arg-100, Lys-101, Lys-104, His-106, and 127 to 135 (EDVTTSGKS) each bind 5-phospho-alpha-D-ribose 1-diphosphate. Thr-131 and Arg-160 together coordinate orotate.

Belongs to the purine/pyrimidine phosphoribosyltransferase family. PyrE subfamily. As to quaternary structure, homodimer. Mg(2+) is required as a cofactor.

The enzyme catalyses orotidine 5'-phosphate + diphosphate = orotate + 5-phospho-alpha-D-ribose 1-diphosphate. It participates in pyrimidine metabolism; UMP biosynthesis via de novo pathway; UMP from orotate: step 1/2. Its function is as follows. Catalyzes the transfer of a ribosyl phosphate group from 5-phosphoribose 1-diphosphate to orotate, leading to the formation of orotidine monophosphate (OMP). This Clostridium botulinum (strain Eklund 17B / Type B) protein is Orotate phosphoribosyltransferase.